The following is a 595-amino-acid chain: NADH-quinone oxidoreductase subunit C/D (595 aa).

The interval Met-1–Gln-186 is NADH dehydrogenase I subunit C. The interval Asp-210 to Arg-595 is NADH dehydrogenase I subunit D.

It in the N-terminal section; belongs to the complex I 30 kDa subunit family. The protein in the C-terminal section; belongs to the complex I 49 kDa subunit family. As to quaternary structure, NDH-1 is composed of 13 different subunits. Subunits NuoB, CD, E, F, and G constitute the peripheral sector of the complex.

It is found in the cell inner membrane. The enzyme catalyses a quinone + NADH + 5 H(+)(in) = a quinol + NAD(+) + 4 H(+)(out). Its function is as follows. NDH-1 shuttles electrons from NADH, via FMN and iron-sulfur (Fe-S) centers, to quinones in the respiratory chain. The immediate electron acceptor for the enzyme in this species is believed to be ubiquinone. Couples the redox reaction to proton translocation (for every two electrons transferred, four hydrogen ions are translocated across the cytoplasmic membrane), and thus conserves the redox energy in a proton gradient. The sequence is that of NADH-quinone oxidoreductase subunit C/D from Acinetobacter baumannii (strain AYE).